We begin with the raw amino-acid sequence, 231 residues long: Transcriptional regulator NRG1 (231 aa).

Ser163 is modified (phosphoserine). 2 consecutive C2H2-type zinc fingers follow at residues 174–196 and 202–226; these read YICK…NRIH and HCCP…YRTH.

The protein resides in the nucleus. Its function is as follows. Transcriptional repressor involved in regulation of glucose repression. Binds to UAS-1 in the STA1 promoter. In Saccharomyces cerevisiae (strain ATCC 204508 / S288c) (Baker's yeast), this protein is Transcriptional regulator NRG1 (NRG1).